Here is a 604-residue protein sequence, read N- to C-terminus: Ribosome-inactivating protein PMRIPm (604 aa).

An N-terminal signal peptide occupies residues 1–43 (MRVVAAILYINVVVALICGLGIQGGALDLQDYPSVSFQGDAMQ). The active site involves Glu211. Intrachain disulfides connect Cys301–Cys332, Cys348–Cys367, and Cys392–Cys409. 2 consecutive Ricin B-type lectin domains span residues 335 to 463 (GEPT…WRVG) and 466 to 598 (VEPI…WLTV). One copy of the 1-alpha repeat lies at 345–387 (AGWCVDVKDGRDNDGNPIQVLSCGDGQERKQQWTFHRDGTIRS). The stretch at 389–429 (LGKCMTAYGFKHGEYVMIYDCDTAIAGANKWVVSIDGTITN) is one 1-beta repeat. The 1-gamma repeat unit spans residues 432 to 465 (SGLVLTAPRGATGTTLLVEKNVHAARQCWRVGDD). The stretch at 477-521 (QEKCLEANYLENTNVSRYTKVFLDDCVLDRQQQRWALYSDGTIRA) is one 2-alpha repeat. Cys480 and Cys502 are disulfide-bonded. An N-linked (GlcNAc...) asparagine glycan is attached at Asn490. Residues 525–563 (RSLRVTADGHRSLDSIIILACKGWGNQRWVFNTDGTILN) form a 2-beta repeat. The stretch at 566-599 (AKLVMDVKDSDVSLLQIILHQSTGKPNQKWLTVT) is one 2-gamma repeat.

This sequence belongs to the ribosome-inactivating protein family. Type 2 RIP subfamily. In terms of assembly, disulfide-linked dimer of A and B chains. Post-translationally, the precursor is processed in two chains, A and B, that are linked by a disulfide bond. Glycosylated. In terms of processing, the N-terminus is blocked. Expressed in rhizome and abundantly in leaves (at protein level).

It catalyses the reaction Endohydrolysis of the N-glycosidic bond at one specific adenosine on the 28S rRNA.. With respect to regulation, strongly inhibited by asialofetuin and asialomucin. Its function is as follows. Gal/GalNAc-specific agglutinin. Behaves as a type-2 ribosome-inactivating protein. Inhibits mammalian ribosomes. The A chain is responsible for inhibiting protein synthesis through the catalytic inactivation of 60S ribosomal subunits by removing adenine from position 4,324 of 28S rRNA. The B chain binds to cell receptors and probably facilitates the entry into the cell of the A chain; B chains are also responsible for cell agglutination (lectin activity). Involved in plant defense against insects. Has very low cytotoxic activity against the human tumor cell line Molt4, but higher against CEM. The protein is Ribosome-inactivating protein PMRIPm of Polygonatum multiflorum (Solomon's seal).